The sequence spans 369 residues: S-adenosyl-L-methionine-dependent uroporphyrinogen III methyltransferase, chloroplastic (369 aa).

A chloroplast-targeting transit peptide spans 1–28 (MALVQRIPISSSSIRNWQQARTNLTPIC). S-adenosyl-L-homocysteine-binding positions include Pro124, 200 to 202 (GGD), 230 to 231 (TA), Met284, and Thr341.

This sequence belongs to the precorrin methyltransferase family. As to expression, mostly expressed in leaves, and, to a lower extent, in stems, flowers and siliques.

The protein localises to the plastid. Its subcellular location is the chloroplast. It catalyses the reaction uroporphyrinogen III + 2 S-adenosyl-L-methionine = precorrin-2 + 2 S-adenosyl-L-homocysteine + H(+). It participates in porphyrin-containing compound metabolism; siroheme biosynthesis; precorrin-2 from uroporphyrinogen III: step 1/1. Functionally, essential protein required for siroheme biosynthesis. Catalyzes the two successive C-2 and C-7 methylation reactions involved in the conversion of uroporphyrinogen III to precorrin-2 via the intermediate formation of precorrin-1. It is a step in the biosynthesis of siroheme. Promotes nitrogen and sulfur assimilation as well as photosynthesis efficiency by triggering chlorophyll, nitrite reductase (NiR) and sulfite reductase (SiR) biosynthesis. This Arabidopsis thaliana (Mouse-ear cress) protein is S-adenosyl-L-methionine-dependent uroporphyrinogen III methyltransferase, chloroplastic.